A 356-amino-acid polypeptide reads, in one-letter code: tRNA-specific 2-thiouridylase MnmA (356 aa).

ATP is bound by residues 6-13 (AMSGGVDS) and Leu-32. The active-site Nucleophile is Cys-101. Cys-101 and Cys-193 are joined by a disulfide. Gly-125 contributes to the ATP binding site. The segment at 143 to 145 (KDQ) is interaction with tRNA. Cys-193 serves as the catalytic Cysteine persulfide intermediate.

This sequence belongs to the MnmA/TRMU family.

The protein resides in the cytoplasm. The catalysed reaction is S-sulfanyl-L-cysteinyl-[protein] + uridine(34) in tRNA + AH2 + ATP = 2-thiouridine(34) in tRNA + L-cysteinyl-[protein] + A + AMP + diphosphate + H(+). Its function is as follows. Catalyzes the 2-thiolation of uridine at the wobble position (U34) of tRNA, leading to the formation of s(2)U34. The protein is tRNA-specific 2-thiouridylase MnmA of Mycobacteroides abscessus (strain ATCC 19977 / DSM 44196 / CCUG 20993 / CIP 104536 / JCM 13569 / NCTC 13031 / TMC 1543 / L948) (Mycobacterium abscessus).